The sequence spans 141 residues: Small ribosomal subunit protein uS8c (141 aa).

This sequence belongs to the universal ribosomal protein uS8 family. In terms of assembly, part of the 30S ribosomal subunit.

The protein localises to the plastid. It localises to the chloroplast. In terms of biological role, one of the primary rRNA binding proteins, it binds directly to 16S rRNA central domain where it helps coordinate assembly of the platform of the 30S subunit. The chain is Small ribosomal subunit protein uS8c (rps8) from Pleurastrum terricola (Filamentous green alga).